The chain runs to 573 residues: E3 ubiquitin-protein ligase RNF168 (573 aa).

Residues C16–R55 form an RING-type zinc finger. S70 bears the Phosphoserine mark. Residues L110–E128 carry the LR motif 1 motif. The UMI motif signature appears at E143–A151. 2 disordered regions span residues E153–S174 and A196–P277. Positions E157 to S174 are enriched in basic and acidic residues. An MIU motif 1 motif is present at residues M168–E191. S197 is subject to Phosphoserine. Residue K210 forms a Glycyl lysine isopeptide (Lys-Gly) (interchain with G-Cter in SUMO2) linkage. Residues P231–V243 are compositionally biased toward polar residues. The span at Q245–D261 shows a compositional bias: basic and acidic residues. T363 bears the Phosphothreonine mark. S416 carries the post-translational modification Phosphoserine. Residues R440 to M463 carry the MIU motif 2 motif. The tract at residues E456–Q528 is disordered. The span at E461–G470 shows a compositional bias: basic and acidic residues. The LR motif 2 motif lies at R467–R478. At S471 the chain carries Phosphoserine. The segment covering N494–N519 has biased composition (basic and acidic residues). K530 is covalently cross-linked (Glycyl lysine isopeptide (Lys-Gly) (interchain with G-Cter in SUMO2)). The disordered stretch occupies residues N540 to K573.

It belongs to the RNF168 family. As to quaternary structure, monomer. Interacts with UBE2N/UBC13. Post-translationally, sumoylated with SUMO1 by PIAS4 in response to double-strand breaks (DSBs). Ubiquitinated.

The protein resides in the nucleus. It carries out the reaction S-ubiquitinyl-[E2 ubiquitin-conjugating enzyme]-L-cysteine + [acceptor protein]-L-lysine = [E2 ubiquitin-conjugating enzyme]-L-cysteine + N(6)-ubiquitinyl-[acceptor protein]-L-lysine.. It functions in the pathway protein modification; protein ubiquitination. Its function is as follows. E3 ubiquitin-protein ligase required for accumulation of repair proteins to sites of DNA damage. Acts with UBE2N/UBC13 to amplify the RNF8-dependent histone ubiquitination. Recruited to sites of DNA damage at double-strand breaks (DSBs) by binding to ubiquitinated histone H2A and H2AX and amplifies the RNF8-dependent H2A ubiquitination, promoting the formation of 'Lys-63'-linked ubiquitin conjugates. This leads to concentrate ubiquitinated histones H2A and H2AX at DNA lesions to the threshold required for recruitment of TP53BP1 and BRCA1. Also recruited at DNA interstrand cross-links (ICLs) sites and promotes accumulation of 'Lys-63'-linked ubiquitination of histones H2A and H2AX, leading to recruitment of FAAP20 and Fanconi anemia (FA) complex, followed by interstrand cross-link repair. H2A ubiquitination also mediates the ATM-dependent transcriptional silencing at regions flanking DSBs in cis, a mechanism to avoid collision between transcription and repair intermediates. Also involved in class switch recombination in immune system, via its role in regulation of DSBs repair. Following DNA damage, promotes the ubiquitination and degradation of JMJD2A/KDM4A in collaboration with RNF8, leading to unmask H4K20me2 mark and promote the recruitment of TP53BP1 at DNA damage sites. Not able to initiate 'Lys-63'-linked ubiquitination in vitro; possibly due to partial occlusion of the UBE2N/UBC13-binding region. Catalyzes monoubiquitination of 'Lys-13' and 'Lys-15' of nucleosomal histone H2A (H2AK13Ub and H2AK15Ub, respectively). This chain is E3 ubiquitin-protein ligase RNF168, found in Bos taurus (Bovine).